The following is a 191-amino-acid chain: Protein YceI (191 aa).

The signal sequence occupies residues 1-22 (MKKSLLGLTFASLMFSAGSAVA).

The protein belongs to the UPF0312 family. Type 1 subfamily.

It is found in the periplasm. In Escherichia coli O17:K52:H18 (strain UMN026 / ExPEC), this protein is Protein YceI.